Reading from the N-terminus, the 202-residue chain is Small heat shock protein hspG5 (202 aa).

The sHSP domain occupies 31-202; sequence KTIIDIIPPM…YSNTIKININ (172 aa). The segment at 96–138 is disordered; that stretch reads TSSTTLDSKEDEASIEEFEDDIKPKSKSTVTTTATKENKEDEN.

Belongs to the small heat shock protein (HSP20) family.

This chain is Small heat shock protein hspG5 (hspG5), found in Dictyostelium discoideum (Social amoeba).